The sequence spans 211 residues: MADESSDAAGEPQPAPAPVRRRSSANYRAYATEPHAKKKSKISASRKLQLKTLMLQIAKQEMEREAEERRGEKGRVLSTRCQPLVLDGLGFEELQDLCRQLHARVDKVDEERYDVEAKVTKNITEIADLTQKIYDLRGKFKRPTLRRVRISADAMMQALLGTRAKESLDLRAHLKQVKKEDIEKENREVGDWRKNIDALSGMEGRKKKFEG.

The disordered stretch occupies residues methionine 1–alanine 25. Alanine 2 carries the post-translational modification N-acetylalanine. Phosphoserine is present on residues serine 5 and serine 6. A phosphoserine; by PKA and PKD/PRKD1 mark is found at serine 23 and serine 24. Tyrosine 27 is modified (phosphotyrosine). Threonine 32 carries the phosphothreonine; by STK4/MST1 modification. Residues glutamate 33–arginine 80 are involved in binding TNC. Phosphoserine; by PKC/PRKCE is present on residues serine 43 and serine 45. Phosphothreonine; by STK4/MST1 is present on threonine 52. Serine 78 carries the post-translational modification Phosphoserine. Threonine 79 carries the phosphothreonine modification. A phosphothreonine; by STK4/MST1 mark is found at threonine 130 and threonine 144. Residues threonine 130 to serine 151 form an involved in binding TNC and actin region. At serine 151 the chain carries Phosphoserine; by PAK3. 2 positions are modified to phosphoserine: serine 167 and serine 200.

Belongs to the troponin I family. As to quaternary structure, interacts with TRIM63. Binds to actin and tropomyosin. Interacts with STK4/MST1. Phosphorylated at Ser-23 and Ser-24 by PRKD1; phosphorylation reduces myofilament calcium sensitivity. Phosphorylated preferentially at Thr-32. Phosphorylation by STK4/MST1 alters its binding affinity to TNNC1 (cardiac Tn-C) and TNNT2 (cardiac Tn-T). Phosphorylated at Ser-43 and Ser-45 by PRKCE; phosphorylation increases myocardium contractile dysfunction.

Functionally, troponin I is the inhibitory subunit of troponin, the thin filament regulatory complex which confers calcium-sensitivity to striated muscle actomyosin ATPase activity. The sequence is that of Troponin I, cardiac muscle (Tnni3) from Rattus norvegicus (Rat).